The chain runs to 329 residues: Ferredoxin--NADP reductase 2 (329 aa).

The FAD site is built by Thr18, Glu37, Gln45, Tyr50, Val90, Phe124, Asp285, and Ser326.

This sequence belongs to the ferredoxin--NADP reductase type 2 family. As to quaternary structure, homodimer. The cofactor is FAD.

The enzyme catalyses 2 reduced [2Fe-2S]-[ferredoxin] + NADP(+) + H(+) = 2 oxidized [2Fe-2S]-[ferredoxin] + NADPH. This is Ferredoxin--NADP reductase 2 from Bacillus mycoides (strain KBAB4) (Bacillus weihenstephanensis).